We begin with the raw amino-acid sequence, 550 residues long: CTP synthase (550 aa).

The segment at 1–270 (MTKFVFVTGG…DRLICEELRL (270 aa)) is amidoligase domain. CTP is bound at residue Ser13. Ser13 is a binding site for UTP. Residues 14 to 19 (SLGKGI) and Asp71 each bind ATP. Residues Asp71 and Glu144 each coordinate Mg(2+). CTP-binding positions include 151–153 (DIE), 191–196 (KTKPTQ), and Lys227. Residues 191 to 196 (KTKPTQ) and Lys227 contribute to the UTP site. The 253-residue stretch at 295-547 (TIGMVGKYVD…VEAALAGQQR (253 aa)) folds into the Glutamine amidotransferase type-1 domain. An L-glutamine-binding site is contributed by Gly356. The Nucleophile; for glutamine hydrolysis role is filled by Cys383. Residues 384–387 (LGMQ), Glu407, and Arg473 each bind L-glutamine. Residues His520 and Glu522 contribute to the active site.

This sequence belongs to the CTP synthase family. As to quaternary structure, homotetramer.

The catalysed reaction is UTP + L-glutamine + ATP + H2O = CTP + L-glutamate + ADP + phosphate + 2 H(+). The enzyme catalyses L-glutamine + H2O = L-glutamate + NH4(+). It carries out the reaction UTP + NH4(+) + ATP = CTP + ADP + phosphate + 2 H(+). It participates in pyrimidine metabolism; CTP biosynthesis via de novo pathway; CTP from UDP: step 2/2. Allosterically activated by GTP, when glutamine is the substrate; GTP has no effect on the reaction when ammonia is the substrate. The allosteric effector GTP functions by stabilizing the protein conformation that binds the tetrahedral intermediate(s) formed during glutamine hydrolysis. Inhibited by the product CTP, via allosteric rather than competitive inhibition. In terms of biological role, catalyzes the ATP-dependent amination of UTP to CTP with either L-glutamine or ammonia as the source of nitrogen. Regulates intracellular CTP levels through interactions with the four ribonucleotide triphosphates. The protein is CTP synthase of Cupriavidus pinatubonensis (strain JMP 134 / LMG 1197) (Cupriavidus necator (strain JMP 134)).